The primary structure comprises 247 residues: Triosephosphate isomerase (247 aa).

Substrate contacts are provided by Asn10 and Lys12. The active-site Electrophile is the His94. The Proton acceptor role is filled by Glu164.

This sequence belongs to the triosephosphate isomerase family. In terms of assembly, homodimer.

It localises to the cytoplasm. It carries out the reaction D-glyceraldehyde 3-phosphate = dihydroxyacetone phosphate. It catalyses the reaction dihydroxyacetone phosphate = methylglyoxal + phosphate. It participates in carbohydrate biosynthesis; gluconeogenesis. Its pathway is carbohydrate degradation; glycolysis; D-glyceraldehyde 3-phosphate from glycerone phosphate: step 1/1. In terms of biological role, triosephosphate isomerase is an extremely efficient metabolic enzyme that catalyzes the interconversion between dihydroxyacetone phosphate (DHAP) and D-glyceraldehyde-3-phosphate (G3P) in glycolysis and gluconeogenesis. Its function is as follows. It is also responsible for the non-negligible production of methylglyoxal a reactive cytotoxic side-product that modifies and can alter proteins, DNA and lipids. This chain is Triosephosphate isomerase (tpi-1), found in Caenorhabditis elegans.